The following is a 454-amino-acid chain: Exopolyphosphatase PRUNE1 (454 aa).

The residue at position 1 (M1) is an N-acetylmethionine. D28, D30, D106, and D179 together coordinate Mn(2+). A DHH motif motif is present at residues 106–108; the sequence is DHH. Positions 394–421 are essential for homodimerization; it reads SLISGLSQDEEDPPLPPTPMNSLVDECP. The segment at 397-420 is disordered; sequence SGLSQDEEDPPLPPTPMNSLVDEC. At S400 the chain carries Phosphoserine. Position 411 is a phosphothreonine (T411). A Phosphoserine modification is found at S415.

The protein belongs to the PPase class C family. Prune subfamily. In terms of assembly, homooligomer. Able to homodimerize via its C-terminal domain. Interacts with NME1. Interacts with GSK3; at focal adhesion complexes where paxillin and vinculin are colocalized. Interacts with alpha and beta tubulin. The cofactor is Mn(2+).

It localises to the cytoplasm. The protein localises to the nucleus. Its subcellular location is the cell junction. The protein resides in the focal adhesion. The enzyme catalyses diphosphate + H2O = 2 phosphate + H(+). With respect to regulation, activated by magnesium ions and inhibited by manganese ions. Inhibited by dipyridamole, moderately sensitive to IBMX and inhibited by vinpocetine. Phosphodiesterase (PDE) that has higher activity toward cAMP than cGMP, as substrate. Plays a role in cell proliferation, migration and differentiation, and acts as a negative regulator of NME1. Plays a role in the regulation of neurogenesis. Involved in the regulation of microtubule polymerization. The sequence is that of Exopolyphosphatase PRUNE1 (Prune1) from Mus musculus (Mouse).